The sequence spans 285 residues: 3-methyl-2-oxobutanoate hydroxymethyltransferase 1 (285 aa).

2 residues coordinate Mg(2+): aspartate 49 and aspartate 88. 3-methyl-2-oxobutanoate is bound by residues 49–50, aspartate 88, and lysine 118; that span reads DS. Position 120 (glutamate 120) interacts with Mg(2+). The active-site Proton acceptor is glutamate 187.

Belongs to the PanB family. In terms of assembly, homodecamer; pentamer of dimers. It depends on Mg(2+) as a cofactor.

It is found in the cytoplasm. The catalysed reaction is 3-methyl-2-oxobutanoate + (6R)-5,10-methylene-5,6,7,8-tetrahydrofolate + H2O = 2-dehydropantoate + (6S)-5,6,7,8-tetrahydrofolate. Its pathway is cofactor biosynthesis; (R)-pantothenate biosynthesis; (R)-pantoate from 3-methyl-2-oxobutanoate: step 1/2. Catalyzes the reversible reaction in which hydroxymethyl group from 5,10-methylenetetrahydrofolate is transferred onto alpha-ketoisovalerate to form ketopantoate. The chain is 3-methyl-2-oxobutanoate hydroxymethyltransferase 1 from Burkholderia lata (strain ATCC 17760 / DSM 23089 / LMG 22485 / NCIMB 9086 / R18194 / 383).